The primary structure comprises 140 residues: Small ribosomal subunit protein uS12 (140 aa).

Positions 33-55 (KEQTNVSSPQKRGVCTRVGTMTP) are disordered. A 3-methylthioaspartic acid modification is found at Asp-102.

It belongs to the universal ribosomal protein uS12 family. As to quaternary structure, part of the 30S ribosomal subunit. Contacts proteins S8 and S17. May interact with IF1 in the 30S initiation complex.

With S4 and S5 plays an important role in translational accuracy. Its function is as follows. Interacts with and stabilizes bases of the 16S rRNA that are involved in tRNA selection in the A site and with the mRNA backbone. Located at the interface of the 30S and 50S subunits, it traverses the body of the 30S subunit contacting proteins on the other side and probably holding the rRNA structure together. The combined cluster of proteins S8, S12 and S17 appears to hold together the shoulder and platform of the 30S subunit. This is Small ribosomal subunit protein uS12 from Geobacillus thermodenitrificans (strain NG80-2).